Reading from the N-terminus, the 224-residue chain is MEINEKLLRQIIEDVLRDMKGSDKPVSFNAPAASTAPQTAAPAGDGFLTEVGEARQGTQQDEVIIAVGPAFGLAQTVNIVGLPHKSILREVIAGIEEEGIKARVIRCFKSSDVAFVAVEGNRLSGSGISIGIQSKGTTVIHQQGLPPLSNLELFPQAPLLTLETYRQIGKNAARYAKRESPQPVPTLNDQMARPKYQAKSAILHIKETKYVVTGKNPQELRVAL.

The targets protein to the BMC stretch occupies residues Met-1–Asp-18.

It belongs to the diol/glycerol dehydratase medium subunit family. The propanediol dehydratase enzyme is a heterotrimeric complex composed of a large (PduC), a medium (PduD) and a small (PduE) subunit. Requires adenosylcob(III)alamin as cofactor.

Its subcellular location is the bacterial microcompartment. It catalyses the reaction propane-1,2-diol = propanal + H2O. The protein operates within polyol metabolism; 1,2-propanediol degradation. Its activity is regulated as follows. Inhibited by glycerol. Functionally, part of the PduCDE complex that catalyzes the dehydration of 1,2-propanediol (1,2-PD) to propionaldehyde. Required for S.typhimurium growth on 1,2-PD as the sole carbon and energy source. This subunit is directly targeted to the bacterial microcompartment (BMC) dedicated to 1,2-PD degradation, and is also responsible for targeting the other 2 subunits (pduC and pduE). In terms of biological role, the 1,2-PD-specific bacterial microcompartment (BMC) concentrates low levels of 1,2-PD catabolic enzymes, concentrates volatile reaction intermediates thus enhancing pathway flux and keeps the level of toxic, mutagenic propionaldehyde low. This Salmonella typhimurium (strain LT2 / SGSC1412 / ATCC 700720) protein is Propanediol dehydratase medium subunit.